A 161-amino-acid chain; its full sequence is TRAF-interacting protein with FHA domain-containing protein B (161 aa).

One can recognise an FHA domain in the interval L36–L91.

As to quaternary structure, interacts with TIFA.

Inhibits TIFA-mediated TRAF6 activation possibly by inducing a conformational change in TIFA. This is TRAF-interacting protein with FHA domain-containing protein B from Homo sapiens (Human).